Consider the following 144-residue polypeptide: Large ribosomal subunit protein uL15 (144 aa).

The tract at residues methionine 1–isoleucine 48 is disordered. Gly residues predominate over residues arginine 21 to cysteine 31.

The protein belongs to the universal ribosomal protein uL15 family. As to quaternary structure, part of the 50S ribosomal subunit.

In terms of biological role, binds to the 23S rRNA. The sequence is that of Large ribosomal subunit protein uL15 from Shewanella woodyi (strain ATCC 51908 / MS32).